The sequence spans 552 residues: Hydroxylamine reductase (552 aa).

Residues Cys5, Cys8, Cys20, and Cys27 each coordinate [2Fe-2S] cluster. Positions 251, 275, 319, 407, 435, 460, 494, and 496 each coordinate hybrid [4Fe-2O-2S] cluster. The residue at position 407 (Cys407) is a Cysteine persulfide.

Belongs to the HCP family. It depends on [2Fe-2S] cluster as a cofactor. Hybrid [4Fe-2O-2S] cluster serves as cofactor.

It localises to the cytoplasm. It catalyses the reaction A + NH4(+) + H2O = hydroxylamine + AH2 + H(+). Its function is as follows. Catalyzes the reduction of hydroxylamine to form NH(3) and H(2)O. The protein is Hydroxylamine reductase of Shigella sonnei (strain Ss046).